The sequence spans 223 residues: Small ribosomal subunit protein uS5 (223 aa).

Residues 1-15 (MTEAVAAEATETAPA) show a composition bias toward low complexity. The interval 1 to 51 (MTEAVAAEATETAPATDDRRGGRRGERGDRGQGRGDRGGRGGRDGGREAEK) is disordered. Residues 16–51 (TDDRRGGRRGERGDRGQGRGDRGGRGGRDGGREAEK) are compositionally biased toward basic and acidic residues. In terms of domain architecture, S5 DRBM spans 54–117 (FVERVVTINR…EEAKKSFFRV (64 aa)).

Belongs to the universal ribosomal protein uS5 family. In terms of assembly, part of the 30S ribosomal subunit. Contacts proteins S4 and S8.

In terms of biological role, with S4 and S12 plays an important role in translational accuracy. Its function is as follows. Located at the back of the 30S subunit body where it stabilizes the conformation of the head with respect to the body. This is Small ribosomal subunit protein uS5 from Paenarthrobacter aurescens (strain TC1).